Here is a 178-residue protein sequence, read N- to C-terminus: Crossover junction endodeoxyribonuclease RuvC (178 aa).

Catalysis depends on residues aspartate 7, glutamate 67, and aspartate 139. Residues aspartate 7, glutamate 67, and aspartate 139 each coordinate Mg(2+).

Belongs to the RuvC family. As to quaternary structure, homodimer which binds Holliday junction (HJ) DNA. The HJ becomes 2-fold symmetrical on binding to RuvC with unstacked arms; it has a different conformation from HJ DNA in complex with RuvA. In the full resolvosome a probable DNA-RuvA(4)-RuvB(12)-RuvC(2) complex forms which resolves the HJ. Requires Mg(2+) as cofactor.

It localises to the cytoplasm. It catalyses the reaction Endonucleolytic cleavage at a junction such as a reciprocal single-stranded crossover between two homologous DNA duplexes (Holliday junction).. The RuvA-RuvB-RuvC complex processes Holliday junction (HJ) DNA during genetic recombination and DNA repair. Endonuclease that resolves HJ intermediates. Cleaves cruciform DNA by making single-stranded nicks across the HJ at symmetrical positions within the homologous arms, yielding a 5'-phosphate and a 3'-hydroxyl group; requires a central core of homology in the junction. The consensus cleavage sequence is 5'-(A/T)TT(C/G)-3'. Cleavage occurs on the 3'-side of the TT dinucleotide at the point of strand exchange. HJ branch migration catalyzed by RuvA-RuvB allows RuvC to scan DNA until it finds its consensus sequence, where it cleaves and resolves the cruciform DNA. This Trichlorobacter lovleyi (strain ATCC BAA-1151 / DSM 17278 / SZ) (Geobacter lovleyi) protein is Crossover junction endodeoxyribonuclease RuvC.